The chain runs to 217 residues: Methylthioribulose-1-phosphate dehydratase (217 aa).

Residues H106 and H108 each coordinate Zn(2+).

It belongs to the aldolase class II family. MtnB subfamily. Requires Zn(2+) as cofactor.

It carries out the reaction 5-(methylsulfanyl)-D-ribulose 1-phosphate = 5-methylsulfanyl-2,3-dioxopentyl phosphate + H2O. It participates in amino-acid biosynthesis; L-methionine biosynthesis via salvage pathway; L-methionine from S-methyl-5-thio-alpha-D-ribose 1-phosphate: step 2/6. In terms of biological role, catalyzes the dehydration of methylthioribulose-1-phosphate (MTRu-1-P) into 2,3-diketo-5-methylthiopentyl-1-phosphate (DK-MTP-1-P). This Xanthomonas campestris pv. campestris (strain 8004) protein is Methylthioribulose-1-phosphate dehydratase.